A 152-amino-acid chain; its full sequence is Deoxyuridine 5'-triphosphate nucleotidohydrolase (152 aa).

Residues 71–73 (RSG), Asn-84, 88–90 (LID), and Met-98 contribute to the substrate site.

It belongs to the dUTPase family. Mg(2+) serves as cofactor.

It catalyses the reaction dUTP + H2O = dUMP + diphosphate + H(+). Its pathway is pyrimidine metabolism; dUMP biosynthesis; dUMP from dCTP (dUTP route): step 2/2. Its function is as follows. This enzyme is involved in nucleotide metabolism: it produces dUMP, the immediate precursor of thymidine nucleotides and it decreases the intracellular concentration of dUTP so that uracil cannot be incorporated into DNA. The protein is Deoxyuridine 5'-triphosphate nucleotidohydrolase of Erwinia tasmaniensis (strain DSM 17950 / CFBP 7177 / CIP 109463 / NCPPB 4357 / Et1/99).